We begin with the raw amino-acid sequence, 171 residues long: CASP-like protein 0U2 (171 aa).

At 1-22 (MPVFGLAALKLNWEALSTPKFR) the chain is on the cytoplasmic side. The chain crosses the membrane as a helical span at residues 23 to 42 (VTFAQWVCSLLMWSLMASYS). Topologically, residues 43-48 (KHGEFK) are extracellular. The helical transmembrane segment at 49 to 69 (FVVVFGLVMWGLASTYLVYQL) threads the bilayer. Over 70–77 (LNGPPLAP) the chain is Cytoplasmic. The helical transmembrane segment at 78–98 (IVEFWANVAAGSLAFICLVLA) threads the bilayer. Residues 99 to 121 (SATCNRAVGEPQTKVCSGELKPK) lie on the Extracellular side of the membrane. Residues 122–142 (ASAAFAFLLLCAYGGLAYLSW) form a helical membrane-spanning segment. The Cytoplasmic segment spans residues 143 to 171 (RTWRNPPTIASYALHDDPEFAQPLHSSHK).

Belongs to the Casparian strip membrane proteins (CASP) family. Homodimer and heterodimers.

The protein resides in the cell membrane. The sequence is that of CASP-like protein 0U2 from Chlorokybus atmophyticus (Soil alga).